A 277-amino-acid chain; its full sequence is Diaminopimelate epimerase (277 aa).

The substrate site is built by N13, Q46, and N66. The Proton donor role is filled by C75. Substrate contacts are provided by residues 76-77, N160, N193, and 211-212; these read GN and ER. C220 (proton acceptor) is an active-site residue. Substrate is bound at residue 221–222; the sequence is GS.

It belongs to the diaminopimelate epimerase family. In terms of assembly, homodimer.

Its subcellular location is the cytoplasm. It carries out the reaction (2S,6S)-2,6-diaminopimelate = meso-2,6-diaminopimelate. It participates in amino-acid biosynthesis; L-lysine biosynthesis via DAP pathway; DL-2,6-diaminopimelate from LL-2,6-diaminopimelate: step 1/1. Its function is as follows. Catalyzes the stereoinversion of LL-2,6-diaminopimelate (L,L-DAP) to meso-diaminopimelate (meso-DAP), a precursor of L-lysine and an essential component of the bacterial peptidoglycan. This is Diaminopimelate epimerase from Legionella pneumophila (strain Lens).